The following is a 183-amino-acid chain: MSQPPKVLLLYAHPESQDSVANRVLLRPAQQLEHVTVHDLYAHYPDFFIDIHHEQQLLREHQVIVFQHPLYTYSCPALLKEWLDRVLSRGFASGMGGNALAGKYWRSVITTGEPEGAYRTGGYNRYPIEDILRPFELTAAMCHMHWLTPMLVYWARRQKPEVLESHATAYGDWLRNPLPHGGR.

It belongs to the NAD(P)H dehydrogenase (quinone) family. KefG subfamily. In terms of assembly, interacts with KefB.

Its subcellular location is the cell inner membrane. The catalysed reaction is a quinone + NADH + H(+) = a quinol + NAD(+). It catalyses the reaction a quinone + NADPH + H(+) = a quinol + NADP(+). In terms of biological role, regulatory subunit of a potassium efflux system that confers protection against electrophiles. Required for full activity of KefB. In Serratia proteamaculans (strain 568), this protein is Glutathione-regulated potassium-efflux system ancillary protein KefG.